Reading from the N-terminus, the 265-residue chain is Orotidine 5'-phosphate decarboxylase (265 aa).

Residues Asp-37, 59-61 (KTH), 91-100 (DRKFADIGNT), Tyr-217, and Arg-235 contribute to the substrate site. Lys-93 acts as the Proton donor in catalysis.

This sequence belongs to the OMP decarboxylase family.

The enzyme catalyses orotidine 5'-phosphate + H(+) = UMP + CO2. It functions in the pathway pyrimidine metabolism; UMP biosynthesis via de novo pathway; UMP from orotate: step 2/2. The sequence is that of Orotidine 5'-phosphate decarboxylase (URA3) from Candida glabrata (strain ATCC 2001 / BCRC 20586 / JCM 3761 / NBRC 0622 / NRRL Y-65 / CBS 138) (Yeast).